The primary structure comprises 582 residues: Heterogeneous nuclear ribonucleoprotein C homolog (582 aa).

Residues 1–21 (MSEALETGDPSPPPPIVSENG) are disordered. 3 C2H2-type zinc fingers span residues 102 to 125 (YYCCLCNRPYKTHATLTAHLRGYH), 130 to 154 (SSCDEPGCNFLSFTDQEKKRHRRTH), and 213 to 235 (YACLKCPHSVFNAYHAARHVEMH).

Its subcellular location is the nucleus. The sequence is that of Heterogeneous nuclear ribonucleoprotein C homolog from Caenorhabditis elegans.